Reading from the N-terminus, the 194-residue chain is Putative manganese efflux pump MntP (194 aa).

6 consecutive transmembrane segments (helical) span residues 3–23 (PITI…AAIG), 37–57 (LYVA…GWLL), 65–85 (IAAF…IHMI), 112–132 (LAAT…SLAF), 137–157 (IGIV…FGVM), and 170–190 (AEIV…YEHL).

It belongs to the MntP (TC 9.B.29) family.

It localises to the cell inner membrane. In terms of biological role, probably functions as a manganese efflux pump. This is Putative manganese efflux pump MntP from Xylella fastidiosa (strain M12).